Reading from the N-terminus, the 427-residue chain is Peptidase B (427 aa).

Positions 195 and 200 each coordinate Mn(2+). The active site involves Lys-207. 3 residues coordinate Mn(2+): Asp-218, Asp-277, and Glu-279. Residue Arg-281 is part of the active site.

It belongs to the peptidase M17 family. Homohexamer. It depends on Mn(2+) as a cofactor.

The protein localises to the cytoplasm. The catalysed reaction is Release of an N-terminal amino acid, Xaa, from a peptide or arylamide. Xaa is preferably Glu or Asp but may be other amino acids, including Leu, Met, His, Cys and Gln.. Its function is as follows. Probably plays an important role in intracellular peptide degradation. The chain is Peptidase B from Escherichia coli O127:H6 (strain E2348/69 / EPEC).